We begin with the raw amino-acid sequence, 253 residues long: MLSRRIIPCLDVNAGRVVKGVRFQQLRDAGDPVACARAYDAQGADELIFLDITASSDERKIMHDVVAATAEQCFMPLTVGGGLRTVADIETMLKAGADKVSLNTAAIKNPQLIADAAERFGVQCIVVAIDAKREPDGQSWRVYTHGGRNPTELDAIAWARRAVELGAGEILLTSMDRDGTGDGYDLELTRGVSDAVSVPVIASGGAGTLQHLADVLDQGHASAVLAASIFHFGTYTIAQAKAFLGQRGVPVRS.

Residues Asp11 and Asp130 contribute to the active site.

The protein belongs to the HisA/HisF family. As to quaternary structure, heterodimer of HisH and HisF.

The protein resides in the cytoplasm. It carries out the reaction 5-[(5-phospho-1-deoxy-D-ribulos-1-ylimino)methylamino]-1-(5-phospho-beta-D-ribosyl)imidazole-4-carboxamide + L-glutamine = D-erythro-1-(imidazol-4-yl)glycerol 3-phosphate + 5-amino-1-(5-phospho-beta-D-ribosyl)imidazole-4-carboxamide + L-glutamate + H(+). It participates in amino-acid biosynthesis; L-histidine biosynthesis; L-histidine from 5-phospho-alpha-D-ribose 1-diphosphate: step 5/9. In terms of biological role, IGPS catalyzes the conversion of PRFAR and glutamine to IGP, AICAR and glutamate. The HisF subunit catalyzes the cyclization activity that produces IGP and AICAR from PRFAR using the ammonia provided by the HisH subunit. This Opitutus terrae (strain DSM 11246 / JCM 15787 / PB90-1) protein is Imidazole glycerol phosphate synthase subunit HisF.